A 185-amino-acid polypeptide reads, in one-letter code: Ribosome-recycling factor (185 aa).

This sequence belongs to the RRF family.

It localises to the cytoplasm. In terms of biological role, responsible for the release of ribosomes from messenger RNA at the termination of protein biosynthesis. May increase the efficiency of translation by recycling ribosomes from one round of translation to another. The protein is Ribosome-recycling factor of Chloroflexus aggregans (strain MD-66 / DSM 9485).